A 498-amino-acid polypeptide reads, in one-letter code: Glycerol kinase (498 aa).

Threonine 12 serves as a coordination point for ADP. 3 residues coordinate ATP: threonine 12, threonine 13, and serine 14. Threonine 12 contacts sn-glycerol 3-phosphate. Arginine 16 is an ADP binding site. 4 residues coordinate sn-glycerol 3-phosphate: arginine 82, glutamate 83, tyrosine 134, and aspartate 243. Glycerol is bound by residues arginine 82, glutamate 83, tyrosine 134, aspartate 243, and glutamine 244. Positions 265 and 308 each coordinate ADP. Positions 265, 308, 312, and 409 each coordinate ATP. The ADP site is built by glycine 409 and asparagine 413.

This sequence belongs to the FGGY kinase family. In terms of assembly, homotetramer and homodimer (in equilibrium).

The catalysed reaction is glycerol + ATP = sn-glycerol 3-phosphate + ADP + H(+). It participates in polyol metabolism; glycerol degradation via glycerol kinase pathway; sn-glycerol 3-phosphate from glycerol: step 1/1. With respect to regulation, activated by phosphorylation and inhibited by fructose 1,6-bisphosphate (FBP). Key enzyme in the regulation of glycerol uptake and metabolism. Catalyzes the phosphorylation of glycerol to yield sn-glycerol 3-phosphate. This is Glycerol kinase from Clostridium botulinum (strain Okra / Type B1).